The primary structure comprises 282 residues: Parvulin-like PPIase (282 aa).

A signal peptide spans 1 to 20 (MKKLSVIFLSVSMLSSIAFC). Positions 138 to 231 (KEQIKVAHIL…FGWHIIKVLE (94 aa)) constitute a PpiC domain.

Belongs to the PpiC/parvulin rotamase family.

It localises to the cell outer membrane. It carries out the reaction [protein]-peptidylproline (omega=180) = [protein]-peptidylproline (omega=0). In Rickettsia typhi (strain ATCC VR-144 / Wilmington), this protein is Parvulin-like PPIase (plp).